Consider the following 140-residue polypeptide: ATP synthase epsilon chain (140 aa).

It belongs to the ATPase epsilon chain family. F-type ATPases have 2 components, CF(1) - the catalytic core - and CF(0) - the membrane proton channel. CF(1) has five subunits: alpha(3), beta(3), gamma(1), delta(1), epsilon(1). CF(0) has three main subunits: a, b and c.

Its subcellular location is the cell inner membrane. Produces ATP from ADP in the presence of a proton gradient across the membrane. This Xylella fastidiosa (strain Temecula1 / ATCC 700964) protein is ATP synthase epsilon chain.